Reading from the N-terminus, the 636-residue chain is 1-deoxy-D-xylulose-5-phosphate synthase 2 (636 aa).

Thiamine diphosphate is bound by residues H78 and 119–121; that span reads AHS. Residue D150 coordinates Mg(2+). Thiamine diphosphate-binding positions include 151–152, N179, Y288, and E370; that span reads GS. Residue N179 participates in Mg(2+) binding.

This sequence belongs to the transketolase family. DXPS subfamily. Homodimer. Requires Mg(2+) as cofactor. The cofactor is thiamine diphosphate.

It carries out the reaction D-glyceraldehyde 3-phosphate + pyruvate + H(+) = 1-deoxy-D-xylulose 5-phosphate + CO2. It participates in metabolic intermediate biosynthesis; 1-deoxy-D-xylulose 5-phosphate biosynthesis; 1-deoxy-D-xylulose 5-phosphate from D-glyceraldehyde 3-phosphate and pyruvate: step 1/1. Its function is as follows. Catalyzes the acyloin condensation reaction between C atoms 2 and 3 of pyruvate and glyceraldehyde 3-phosphate to yield 1-deoxy-D-xylulose-5-phosphate (DXP). The chain is 1-deoxy-D-xylulose-5-phosphate synthase 2 from Jannaschia sp. (strain CCS1).